The chain runs to 246 residues: Proteasome subunit alpha type-6-A (246 aa).

Belongs to the peptidase T1A family. In terms of assembly, component of the 20S core complex of the 26S proteasome. The 26S proteasome is composed of a core protease (CP), known as the 20S proteasome, capped at one or both ends by the 19S regulatory particle (RP/PA700). The 20S proteasome core is composed of 28 subunits that are arranged in four stacked rings, resulting in a barrel-shaped structure. The two end rings are each formed by seven alpha subunits, and the two central rings are each formed by seven beta subunits. The catalytic chamber with the active sites is on the inside of the barrel. In terms of tissue distribution, ubiquitous low levels, higher expression in siliques and flowers.

It is found in the cytoplasm. Its subcellular location is the nucleus. In terms of biological role, the proteasome is a multicatalytic proteinase complex which is characterized by its ability to cleave peptides with Arg, Phe, Tyr, Leu, and Glu adjacent to the leaving group at neutral or slightly basic pH. The proteasome has an ATP-dependent proteolytic activity. This Arabidopsis thaliana (Mouse-ear cress) protein is Proteasome subunit alpha type-6-A (PAA1).